The primary structure comprises 101 residues: Protein S100-A7 (101 aa).

Residue Ser2 is modified to N-acetylserine. EF-hand domains are found at residues 13 to 48 (MIDM…SACD) and 50 to 85 (KGTN…IATD). Zn(2+) contacts are provided by His18 and Asp25. A disulfide bridge links Cys47 with Cys96. Ca(2+)-binding residues include Asp63, Asn65, Asp67, Lys69, and Glu74. The Zn(2+) site is built by His87 and His91.

As to quaternary structure, interacts with RANBP9. Fetal ear, skin, and tongue and human cell lines. Highly up-regulated in psoriatic epidermis. Also highly expressed in the urine of bladder squamous cell carcinoma (SCC) bearing patients.

It is found in the cytoplasm. Its subcellular location is the secreted. In Homo sapiens (Human), this protein is Protein S100-A7 (S100A7).